The sequence spans 293 residues: MDDGEELPVKTMLMLHDDLILNCLARVSRSNHPTLSLVCKRFHSLLASVELYQTRTLLGRTERCFYRQYSSRKILVQILSPNSTSAGIAVVGPNIDAIGGGIKSNTLSSVMVMDSRSHTWREAPSMRVPRMFPSVCTLDGKIYVMGGCDNLDSTNWMEVFDTKTQTWEFLQIPSEEIFGGSAYESVRYEGTVYVWSEKKDVTYKLHEGRWSAADMSANGWGWPGSSYCVIENVLYSCFVHKIRWYDPKERVWTPLKGLPSLPCNGHVKLADYGEKMVILWEKYVDVDEKKMIW.

Residues V9–R55 form the F-box domain. 3 Kelch repeats span residues N94–G140, K141–R187, and S226–Y272.

This chain is Putative F-box/kelch-repeat protein At4g34170, found in Arabidopsis thaliana (Mouse-ear cress).